The chain runs to 764 residues: Elongation factor G, mitochondrial (764 aa).

The transit peptide at 1-23 (MIRSLRAVSRLGARGFSSFAAAR) directs the protein to the mitochondrion. The tr-type G domain maps to 56-337 (ARMRNIGISA…AICEYLPDPS (282 aa)). Residues 65–72 (AHIDSGKT), 136–140 (DTPGH), and 190–193 (NKMD) each bind GTP.

It belongs to the TRAFAC class translation factor GTPase superfamily. Classic translation factor GTPase family. EF-G/EF-2 subfamily.

It localises to the mitochondrion. It functions in the pathway protein biosynthesis; polypeptide chain elongation. Its function is as follows. Mitochondrial GTPase that catalyzes the GTP-dependent ribosomal translocation step during translation elongation. During this step, the ribosome changes from the pre-translocational (PRE) to the post-translocational (POST) state as the newly formed A-site-bound peptidyl-tRNA and P-site-bound deacylated tRNA move to the P and E sites, respectively. Catalyzes the coordinated movement of the two tRNA molecules, the mRNA and conformational changes in the ribosome. This is Elongation factor G, mitochondrial from Yarrowia lipolytica (strain CLIB 122 / E 150) (Yeast).